We begin with the raw amino-acid sequence, 354 residues long: Ferrochelatase (354 aa).

Fe cation-binding residues include histidine 214 and glutamate 295.

It belongs to the ferrochelatase family.

It localises to the cytoplasm. The enzyme catalyses heme b + 2 H(+) = protoporphyrin IX + Fe(2+). The protein operates within porphyrin-containing compound metabolism; protoheme biosynthesis; protoheme from protoporphyrin-IX: step 1/1. Functionally, catalyzes the ferrous insertion into protoporphyrin IX. In Burkholderia lata (strain ATCC 17760 / DSM 23089 / LMG 22485 / NCIMB 9086 / R18194 / 383), this protein is Ferrochelatase.